We begin with the raw amino-acid sequence, 374 residues long: Pectate lyase 3 (374 aa).

Positions 1–22 (MKYLLPSAAAGLLLLAAQPTMA) are cleaved as a signal peptide. A disulfide bond links cysteine 93 and cysteine 176. Ca(2+) contacts are provided by aspartate 150, aspartate 152, glutamate 187, and aspartate 191. Arginine 239 is a catalytic residue. A disulfide bridge connects residues cysteine 350 and cysteine 373.

The protein belongs to the polysaccharide lyase 1 family. PLADES subfamily. Ca(2+) serves as cofactor.

Its subcellular location is the secreted. The enzyme catalyses Eliminative cleavage of (1-&gt;4)-alpha-D-galacturonan to give oligosaccharides with 4-deoxy-alpha-D-galact-4-enuronosyl groups at their non-reducing ends.. It functions in the pathway glycan metabolism; pectin degradation; 2-dehydro-3-deoxy-D-gluconate from pectin: step 2/5. In terms of biological role, involved in maceration and soft-rotting of plant tissue. In Pectobacterium carotovorum (Erwinia carotovora), this protein is Pectate lyase 3 (pel3).